The primary structure comprises 352 residues: MIRIAIDCMGGDFGLPVTIPAAIEFARQFPDTRLLLVGLPDAIEAALAERRDAPRDRLDIVPATEVVSMDDPVEVALRRKKDSSMRLAAQAVKDGRADACISAGNTGAWMAISRYVLKTLDGIDRPAIATSIPNQTGRATTVLDLGANVDCSAEHLLQFAIMGAALSQAVDHRDRPTVGLLNIGEEIIKGNEVVKEAAELLRASPLNFYGNVEGNDIFKGTVDVVVCDGFVGNVVLKSVEGLAKMLSSVIREEFKRNFITLLAGAFAKPVLNRLRNRVDNRRYNGAALLGLRGVVIKSHGSADAYAFGFALQRAREAVASKLLERTAQTVAQITQRVQSGEAVAPGAAGDTA.

Belongs to the PlsX family. In terms of assembly, homodimer. Probably interacts with PlsY.

Its subcellular location is the cytoplasm. It carries out the reaction a fatty acyl-[ACP] + phosphate = an acyl phosphate + holo-[ACP]. It functions in the pathway lipid metabolism; phospholipid metabolism. In terms of biological role, catalyzes the reversible formation of acyl-phosphate (acyl-PO(4)) from acyl-[acyl-carrier-protein] (acyl-ACP). This enzyme utilizes acyl-ACP as fatty acyl donor, but not acyl-CoA. In Bordetella bronchiseptica (strain ATCC BAA-588 / NCTC 13252 / RB50) (Alcaligenes bronchisepticus), this protein is Phosphate acyltransferase.